Consider the following 188-residue polypeptide: Threonylcarbamoyl-AMP synthase (188 aa).

Residues 4-188 (VENLQQAVDA…ARSLQVLRQG (185 aa)) form the YrdC-like domain.

This sequence belongs to the SUA5 family. TsaC subfamily.

The protein resides in the cytoplasm. The enzyme catalyses L-threonine + hydrogencarbonate + ATP = L-threonylcarbamoyladenylate + diphosphate + H2O. Required for the formation of a threonylcarbamoyl group on adenosine at position 37 (t(6)A37) in tRNAs that read codons beginning with adenine. Catalyzes the conversion of L-threonine, HCO(3)(-)/CO(2) and ATP to give threonylcarbamoyl-AMP (TC-AMP) as the acyladenylate intermediate, with the release of diphosphate. This Vibrio cholerae serotype O1 (strain ATCC 39541 / Classical Ogawa 395 / O395) protein is Threonylcarbamoyl-AMP synthase.